The primary structure comprises 478 residues: ATP synthase subunit beta (478 aa).

158–165 (GGAGVGKT) contacts ATP.

It belongs to the ATPase alpha/beta chains family. As to quaternary structure, F-type ATPases have 2 components, CF(1) - the catalytic core - and CF(0) - the membrane proton channel. CF(1) has five subunits: alpha(3), beta(3), gamma(1), delta(1), epsilon(1). CF(0) has three main subunits: a(1), b(2) and c(9-12). The alpha and beta chains form an alternating ring which encloses part of the gamma chain. CF(1) is attached to CF(0) by a central stalk formed by the gamma and epsilon chains, while a peripheral stalk is formed by the delta and b chains.

It localises to the cell inner membrane. It catalyses the reaction ATP + H2O + 4 H(+)(in) = ADP + phosphate + 5 H(+)(out). In terms of biological role, produces ATP from ADP in the presence of a proton gradient across the membrane. The catalytic sites are hosted primarily by the beta subunits. In Rhizobium johnstonii (strain DSM 114642 / LMG 32736 / 3841) (Rhizobium leguminosarum bv. viciae), this protein is ATP synthase subunit beta.